We begin with the raw amino-acid sequence, 145 residues long: Deoxyuridine 5'-triphosphate nucleotidohydrolase (145 aa).

Substrate contacts are provided by residues 62-64, Asn75, and 79-81; these read RSG and TVD.

Belongs to the dUTPase family. Mg(2+) is required as a cofactor.

It carries out the reaction dUTP + H2O = dUMP + diphosphate + H(+). It functions in the pathway pyrimidine metabolism; dUMP biosynthesis; dUMP from dCTP (dUTP route): step 2/2. This enzyme is involved in nucleotide metabolism: it produces dUMP, the immediate precursor of thymidine nucleotides and it decreases the intracellular concentration of dUTP so that uracil cannot be incorporated into DNA. The polypeptide is Deoxyuridine 5'-triphosphate nucleotidohydrolase (Gloeothece citriformis (strain PCC 7424) (Cyanothece sp. (strain PCC 7424))).